The primary structure comprises 201 residues: Probable chemoreceptor glutamine deamidase CheD (201 aa).

It belongs to the CheD family.

The enzyme catalyses L-glutaminyl-[protein] + H2O = L-glutamyl-[protein] + NH4(+). In terms of biological role, probably deamidates glutamine residues to glutamate on methyl-accepting chemotaxis receptors (MCPs), playing an important role in chemotaxis. The sequence is that of Probable chemoreceptor glutamine deamidase CheD from Chlorobium luteolum (strain DSM 273 / BCRC 81028 / 2530) (Pelodictyon luteolum).